Here is a 24-residue protein sequence, read N- to C-terminus: DYE-linked aldehyde dehydrogenase, alpha chain (24 aa).

In terms of assembly, heterotetramer composed of an alpha, a beta and two gamma chains. It depends on Mo-molybdopterin cytosine dinucleotide as a cofactor.

Functionally, active with aldehydes and formate esters as substrates. The protein is DYE-linked aldehyde dehydrogenase, alpha chain of Amycolatopsis methanolica.